The chain runs to 454 residues: Prenyltransferase nscD (454 aa).

The protein belongs to the tryptophan dimethylallyltransferase family.

It functions in the pathway secondary metabolite biosynthesis. Its function is as follows. Prenyltransferase; part of the gene cluster that mediates the biosynthesis of neosartoricin, a prenylated anthracenone that exhibits T-cell antiproliferative activity, suggestive of a physiological role as an immunosuppressive agent. The non-reducing polyketide synthase nscA probably synthesizes and cyclizes the decaketide backbone. The hydrolase nscB then mediates the product release through hydrolysis followed by spontaneous decarboxylation. The prenyltransferase nscD catalyzes the addition of the dimethylallyl group to the aromatic C5. The FAD-dependent monooxygenase nscC is then responsible for the stereospecific hydroxylation at C2. There is no gene encoding O-acetyltransferase in the nsc gene cluster; thus, the last step of 2-O-acetylation leading to neosartoricin may be catalyzed by an unidentified O-acetyltransferase. The protein is Prenyltransferase nscD of Neosartorya fischeri (strain ATCC 1020 / DSM 3700 / CBS 544.65 / FGSC A1164 / JCM 1740 / NRRL 181 / WB 181) (Aspergillus fischerianus).